Reading from the N-terminus, the 256-residue chain is Major prion protein (256 aa).

A signal peptide spans 1–24; that stretch reads MVKSHIGSWILVLFVAMWSDVGLC. Residues 25-233 are interaction with GRB2, ERI3 and SYN1; the sequence is KKRPKPGGGW…ESQAYYQRGA (209 aa). The disordered stretch occupies residues 28–110; sequence PKPGGGWNTG…QWNKPSKPKT (83 aa). 5 consecutive repeat copies span residues 54-62, 63-70, 71-78, 79-86, and 87-95. Residues 54-95 are 5 X 8 AA tandem repeats of P-H-G-G-G-W-G-Q; it reads PQGGGGWGQPHGGGWGQPHGGGWGQPHGGGWGQPHGGGGWGQ. Residues 55-97 show a composition bias toward gly residues; it reads QGGGGWGQPHGGGWGQPHGGGWGQPHGGGWGQPHGGGGWGQGG. Residues His-64, Gly-65, Gly-66, His-72, Gly-73, Gly-74, His-80, Gly-81, Gly-82, His-88, Gly-90, and Gly-91 each contribute to the Cu(2+) site. The cysteines at positions 182 and 217 are disulfide-linked. Asn-184 and Asn-200 each carry an N-linked (GlcNAc...) asparagine glycan. The GPI-anchor amidated alanine moiety is linked to residue Ala-233. Positions 234–256 are cleaved as a propeptide — removed in mature form; sequence SVILFSPPPVILLISFLIFLIVG.

The protein belongs to the prion family. Monomer and homodimer. Has a tendency to aggregate into amyloid fibrils containing a cross-beta spine, formed by a steric zipper of superposed beta-strands. Soluble oligomers may represent an intermediate stage on the path to fibril formation. Copper binding may promote oligomerization. Interacts with GRB2, APP, ERI3/PRNPIP and SYN1. Mislocalized cytosolically exposed PrP interacts with MGRN1; this interaction alters MGRN1 subcellular location and causes lysosomal enlargement. Interacts with KIAA1191.

The protein resides in the cell membrane. The protein localises to the golgi apparatus. Its function is as follows. Its primary physiological function is unclear. Has cytoprotective activity against internal or environmental stresses. May play a role in neuronal development and synaptic plasticity. May be required for neuronal myelin sheath maintenance. May play a role in iron uptake and iron homeostasis. Soluble oligomers are toxic to cultured neuroblastoma cells and induce apoptosis (in vitro). Association with GPC1 (via its heparan sulfate chains) targets PRNP to lipid rafts. Also provides Cu(2+) or Zn(2+) for the ascorbate-mediated GPC1 deaminase degradation of its heparan sulfate side chains. The protein is Major prion protein (PRNP) of Capra hircus (Goat).